Reading from the N-terminus, the 121-residue chain is uncharacterized protein (121 aa).

2 disordered regions span residues 24 to 43 and 100 to 121; these read SGRT…GRGG and DHEN…TDQR.

This is an uncharacterized protein from Homo sapiens (Human).